The sequence spans 276 residues: Phosphatidylglycerol--prolipoprotein diacylglyceryl transferase (276 aa).

Transmembrane regions (helical) follow at residues 17–37 (LAIHWYGLTYLAAFGLFFFLA), 63–83 (ILFLGVMGVVIGGRLGYCLFY), and 95–115 (ILAVWQGGMSFHGGMLGVLAS). Arg-146 provides a ligand contact to a 1,2-diacyl-sn-glycero-3-phospho-(1'-sn-glycerol). Transmembrane regions (helical) follow at residues 182–202 (SQVYQFLLEGLLLFVLLWLYA), 209–229 (GQVSGAFLVGYGVFRFIAEYF), and 235–255 (FLGILALGLSMGQWLCVPMIV).

It belongs to the Lgt family.

The protein localises to the cell inner membrane. It carries out the reaction L-cysteinyl-[prolipoprotein] + a 1,2-diacyl-sn-glycero-3-phospho-(1'-sn-glycerol) = an S-1,2-diacyl-sn-glyceryl-L-cysteinyl-[prolipoprotein] + sn-glycerol 1-phosphate + H(+). The protein operates within protein modification; lipoprotein biosynthesis (diacylglyceryl transfer). In terms of biological role, catalyzes the transfer of the diacylglyceryl group from phosphatidylglycerol to the sulfhydryl group of the N-terminal cysteine of a prolipoprotein, the first step in the formation of mature lipoproteins. The sequence is that of Phosphatidylglycerol--prolipoprotein diacylglyceryl transferase from Polaromonas sp. (strain JS666 / ATCC BAA-500).